The chain runs to 283 residues: Nucleoid occlusion protein (283 aa).

Positions 142–161 form a DNA-binding region, H-T-H motif; the sequence is ESLAQRLGKGQSTIANKLRL.

The protein belongs to the ParB family.

The protein localises to the cytoplasm. It localises to the nucleoid. In terms of biological role, effects nucleoid occlusion by binding relatively nonspecifically to DNA and preventing the assembly of the division machinery in the vicinity of the nucleoid, especially under conditions that disturb the cell cycle. It helps to coordinate cell division and chromosome segregation by preventing the formation of the Z ring through the nucleoid, which would cause chromosome breakage. The protein is Nucleoid occlusion protein of Shouchella clausii (strain KSM-K16) (Alkalihalobacillus clausii).